Reading from the N-terminus, the 440-residue chain is Chromosome partition protein MukF (440 aa).

Residues 208 to 236 (LSETSGTLRELQDTLEAAGDKLQANLLRI) are leucine-zipper.

It belongs to the MukF family. As to quaternary structure, interacts, and probably forms a ternary complex, with MukE and MukB via its C-terminal region. The complex formation is stimulated by calcium or magnesium. It is required for an interaction between MukE and MukB.

The protein localises to the cytoplasm. It is found in the nucleoid. Functionally, involved in chromosome condensation, segregation and cell cycle progression. May participate in facilitating chromosome segregation by condensation DNA from both sides of a centrally located replisome during cell division. Not required for mini-F plasmid partitioning. Probably acts via its interaction with MukB and MukE. Overexpression results in anucleate cells. It has a calcium binding activity. In Edwardsiella ictaluri (strain 93-146), this protein is Chromosome partition protein MukF.